We begin with the raw amino-acid sequence, 179 residues long: MSILPIVIAPDERLITRASEVTDINDKIKELVNDMFETMYDAEGLGLAAVQVGVLKRIFVVDVQLETIENEPAGYGSTGKFYMINPEITELSDEQVILKEGCLSIPEQSHEIKRPKYLTVKYKDLDNEEQTLKASGWLARCIQHELDHLNGILYIRHLSKLKYDMAITKAQKIKKQHEQ.

2 residues coordinate Fe cation: Cys102 and His144. The active site involves Glu145. His148 is a Fe cation binding site.

It belongs to the polypeptide deformylase family. It depends on Fe(2+) as a cofactor.

It carries out the reaction N-terminal N-formyl-L-methionyl-[peptide] + H2O = N-terminal L-methionyl-[peptide] + formate. Functionally, removes the formyl group from the N-terminal Met of newly synthesized proteins. Requires at least a dipeptide for an efficient rate of reaction. N-terminal L-methionine is a prerequisite for activity but the enzyme has broad specificity at other positions. This Wolbachia sp. subsp. Drosophila simulans (strain wRi) protein is Peptide deformylase.